The chain runs to 467 residues: Fumarate hydratase class II (467 aa).

Residues 98-100 (SGT), Arg-126, 129-132 (HPND), 139-141 (SSN), and Thr-187 contribute to the substrate site. His-188 functions as the Proton donor/acceptor in the catalytic mechanism. Ser-318 is a catalytic residue. Residues Ser-319 and 324–326 (KVN) each bind substrate.

This sequence belongs to the class-II fumarase/aspartase family. Fumarase subfamily. As to quaternary structure, homotetramer.

It is found in the cytoplasm. The catalysed reaction is (S)-malate = fumarate + H2O. The protein operates within carbohydrate metabolism; tricarboxylic acid cycle; (S)-malate from fumarate: step 1/1. Functionally, involved in the TCA cycle. Catalyzes the stereospecific interconversion of fumarate to L-malate. The sequence is that of Fumarate hydratase class II from Escherichia coli O157:H7.